The following is a 540-amino-acid chain: [Co(II) methylated amine-specific corrinoid protein] reductase (540 aa).

4Fe-4S ferredoxin-type domains lie at 471 to 500 (IILE…IVER) and 504 to 535 (RIAK…ITKL). Residues Cys-480, Cys-483, Cys-486, Cys-490, Cys-513, Cys-518, Cys-521, and Cys-525 each contribute to the [4Fe-4S] cluster site.

Monomer. The cofactor is [4Fe-4S] cluster.

The catalysed reaction is 2 Co(II)-[methylamine-specific corrinoid protein] + AH2 + ATP + H2O = 2 Co(I)-[methylamine-specific corrinoid protein] + A + ADP + phosphate + 3 H(+). It carries out the reaction 2 Co(II)-[dimethylamine-specific corrinoid protein] + AH2 + ATP + H2O = 2 Co(I)-[dimethylamine-specific corrinoid protein] + A + ADP + phosphate + 3 H(+). The enzyme catalyses 2 Co(II)-[trimethylamine-specific corrinoid protein] + AH2 + ATP + H2O = 2 Co(I)-[trimethylamine-specific corrinoid protein] + A + ADP + phosphate + 3 H(+). The protein operates within one-carbon metabolism; methanogenesis from methylamine. Its pathway is one-carbon metabolism; methanogenesis from dimethylamine. It participates in one-carbon metabolism; methanogenesis from trimethylamine. Its function is as follows. Reductase required for the activation of corrinoid-dependent methylamine methyltransferase reactions during methanogenesis. Mediates the ATP-dependent reduction of corrinoid proteins from the inactive cobalt(II) state to the active cobalt(I) state. Acts on the corrinoid proteins involved in methanogenesis from monomethylamine (MMA), dimethylamine (DMA) and trimethylamine (TMA), namely MtmC, MtbC and MttC, respectively. The polypeptide is [Co(II) methylated amine-specific corrinoid protein] reductase (Methanosarcina barkeri).